The sequence spans 465 residues: Fumarate hydratase class II (465 aa).

Substrate contacts are provided by residues 98–100 (SGT), Arg-126, 129–132 (HPND), 139–141 (SSN), and Thr-187. The active-site Proton donor/acceptor is His-188. The active site involves Ser-318. Substrate-binding positions include Ser-319 and 324 to 326 (KVN).

Belongs to the class-II fumarase/aspartase family. Fumarase subfamily. As to quaternary structure, homotetramer.

Its subcellular location is the cytoplasm. The enzyme catalyses (S)-malate = fumarate + H2O. The protein operates within carbohydrate metabolism; tricarboxylic acid cycle; (S)-malate from fumarate: step 1/1. Involved in the TCA cycle. Catalyzes the stereospecific interconversion of fumarate to L-malate. The chain is Fumarate hydratase class II from Yersinia pestis.